We begin with the raw amino-acid sequence, 120 residues long: Chaperonin GroEL (120 aa).

ATP is bound at residue 23-27 (DGTTT).

This sequence belongs to the chaperonin (HSP60) family. As to quaternary structure, forms a cylinder of 14 subunits composed of two heptameric rings stacked back-to-back. Interacts with the co-chaperonin GroES.

It is found in the cytoplasm. It catalyses the reaction ATP + H2O + a folded polypeptide = ADP + phosphate + an unfolded polypeptide.. In terms of biological role, together with its co-chaperonin GroES, plays an essential role in assisting protein folding. The GroEL-GroES system forms a nano-cage that allows encapsulation of the non-native substrate proteins and provides a physical environment optimized to promote and accelerate protein folding. The sequence is that of Chaperonin GroEL from Mycobacterium xenopi.